The primary structure comprises 428 residues: Dihydroorotase (428 aa).

Zn(2+)-binding residues include His59 and His61. Substrate contacts are provided by residues 61-63 and Asn93; that span reads HLR. Asp151, His178, and His231 together coordinate Zn(2+). Residue Asn277 coordinates substrate. Asp304 is a binding site for Zn(2+). Residue Asp304 is part of the active site. Substrate is bound by residues His308 and 322–323; that span reads FG.

This sequence belongs to the metallo-dependent hydrolases superfamily. DHOase family. Class I DHOase subfamily. It depends on Zn(2+) as a cofactor.

The enzyme catalyses (S)-dihydroorotate + H2O = N-carbamoyl-L-aspartate + H(+). It participates in pyrimidine metabolism; UMP biosynthesis via de novo pathway; (S)-dihydroorotate from bicarbonate: step 3/3. In terms of biological role, catalyzes the reversible cyclization of carbamoyl aspartate to dihydroorotate. In Bacillus anthracis (strain A0248), this protein is Dihydroorotase.